The primary structure comprises 207 residues: Octanoyltransferase (207 aa).

In terms of domain architecture, BPL/LPL catalytic spans 29–204 (AETRDELWVV…HLERHLSTSK (176 aa)). Substrate-binding positions include 68–75 (RGGQITYH), 135–137 (SLG), and 148–150 (GLS). Cysteine 166 acts as the Acyl-thioester intermediate in catalysis.

This sequence belongs to the LipB family.

It localises to the cytoplasm. The catalysed reaction is octanoyl-[ACP] + L-lysyl-[protein] = N(6)-octanoyl-L-lysyl-[protein] + holo-[ACP] + H(+). The protein operates within protein modification; protein lipoylation via endogenous pathway; protein N(6)-(lipoyl)lysine from octanoyl-[acyl-carrier-protein]: step 1/2. Functionally, catalyzes the transfer of endogenously produced octanoic acid from octanoyl-acyl-carrier-protein onto the lipoyl domains of lipoate-dependent enzymes. Lipoyl-ACP can also act as a substrate although octanoyl-ACP is likely to be the physiological substrate. In Chromobacterium violaceum (strain ATCC 12472 / DSM 30191 / JCM 1249 / CCUG 213 / NBRC 12614 / NCIMB 9131 / NCTC 9757 / MK), this protein is Octanoyltransferase.